The sequence spans 237 residues: Ribitol-5-phosphate cytidylyltransferase (237 aa).

Residues 7-10 and 80-86 each bind CTP; these read LAGG and GEDRNET.

This sequence belongs to the IspD/TarI cytidylyltransferase family. TarI subfamily.

The enzyme catalyses D-ribitol 5-phosphate + CTP + H(+) = CDP-L-ribitol + diphosphate. Its pathway is cell wall biogenesis; poly(ribitol phosphate) teichoic acid biosynthesis. In terms of biological role, catalyzes the transfer of the cytidylyl group of CTP to D-ribitol 5-phosphate. In Listeria innocua serovar 6a (strain ATCC BAA-680 / CLIP 11262), this protein is Ribitol-5-phosphate cytidylyltransferase.